The following is a 110-amino-acid chain: uncharacterized protein (110 aa).

This is an uncharacterized protein from Schizosaccharomyces pombe (strain 972 / ATCC 24843) (Fission yeast).